A 519-amino-acid chain; its full sequence is Galactose-1-phosphate uridylyltransferase (519 aa).

This sequence belongs to the galactose-1-phosphate uridylyltransferase type 2 family.

The protein localises to the cytoplasm. The catalysed reaction is alpha-D-galactose 1-phosphate + UDP-alpha-D-glucose = alpha-D-glucose 1-phosphate + UDP-alpha-D-galactose. It functions in the pathway carbohydrate metabolism; galactose metabolism. In Caldanaerobacter subterraneus subsp. tengcongensis (strain DSM 15242 / JCM 11007 / NBRC 100824 / MB4) (Thermoanaerobacter tengcongensis), this protein is Galactose-1-phosphate uridylyltransferase.